The chain runs to 168 residues: CASP-like protein UU-1 (168 aa).

At 1–17 (MVELESQEAVTVASTAD) the chain is on the cytoplasmic side. The helical transmembrane segment at 18–38 (IAVDVSLRLLAAATSLAAAVV) threads the bilayer. Over 39–54 (VAANHQQRWGIRVDFT) the chain is Extracellular. A helical transmembrane segment spans residues 55-75 (LFQVWIGFVAVNLVCTVYAAA). The Cytoplasmic segment spans residues 76–95 (TAAAAARKAMGRWWLHHADA). The helical transmembrane segment at 96–116 (VVVNLEAAATAGAGAIGSIAM) threads the bilayer. Residues 117–136 (WGNEASGWYAVCRLYRRYCN) lie on the Extracellular side of the membrane. Residues 137-157 (AGAAALALSLAAVLLLGVACA) traverse the membrane as a helical segment. Residues 158–168 (RSRYPKMPPTT) lie on the Cytoplasmic side of the membrane.

It belongs to the Casparian strip membrane proteins (CASP) family. Homodimer and heterodimers.

It localises to the cell membrane. This Oryza sativa subsp. japonica (Rice) protein is CASP-like protein UU-1.